A 102-amino-acid chain; its full sequence is Small ribosomal subunit protein uS10 (102 aa).

This sequence belongs to the universal ribosomal protein uS10 family. Part of the 30S ribosomal subunit.

Involved in the binding of tRNA to the ribosomes. In Geobacter metallireducens (strain ATCC 53774 / DSM 7210 / GS-15), this protein is Small ribosomal subunit protein uS10.